The following is a 265-amino-acid chain: Mlc titration factor A (265 aa).

Residues histidine 111, histidine 148, histidine 152, and glutamate 211 each coordinate Zn(2+).

Belongs to the MtfA family. As to quaternary structure, interacts with Mlc. The cofactor is Zn(2+).

It is found in the cytoplasm. Its function is as follows. Involved in the modulation of the activity of the glucose-phosphotransferase system (glucose-PTS). Interacts with the transcriptional repressor Mlc, preventing its interaction with DNA and leading to the modulation of expression of genes regulated by Mlc, including ptsG, which encodes the PTS system glucose-specific EIICB component. Functionally, shows zinc-dependent metallopeptidase activity. This chain is Mlc titration factor A, found in Escherichia coli O8 (strain IAI1).